Here is a 487-residue protein sequence, read N- to C-terminus: Serine/threonine-protein kinase 4 (487 aa).

Methionine 1 is modified (N-acetylmethionine). The residue at position 3 (threonine 3) is a Phosphothreonine. A Protein kinase domain is found at 30 to 281; that stretch reads FDVLEKLGEG…ATQLLQHPFV (252 aa). ATP is bound by residues 36–44 and lysine 59; that span reads LGEGSYGSV. The Proton acceptor role is filled by aspartate 149. Threonine 183 is modified (phosphothreonine; by autocatalysis). A Phosphoserine modification is found at serine 265. Residues 289-311 adopt a coiled-coil conformation; the sequence is ILRDLINEAMDVKLKRQEAQQRE. Residues 305 to 334 form a disordered region; the sequence is QEAQQREVDQDDEENSEEDEMDSGTMVRAA. The segment covering 313–326 has biased composition (acidic residues); sequence DQDDEENSEEDEMD. Residue serine 320 is modified to Phosphoserine. Phosphothreonine is present on residues threonine 340 and threonine 367. At threonine 387 the chain carries Phosphothreonine; by PKB/AKT1. A Phosphoserine modification is found at serine 410. Tyrosine 433 is modified (phosphotyrosine). The region spanning 433–480 is the SARAH domain; the sequence is YEFLKSWTVEDLQKRLLALDPMMEQEMEEIRQKYRSKRQPILDAIEAK.

It belongs to the protein kinase superfamily. STE Ser/Thr protein kinase family. STE20 subfamily. As to quaternary structure, homodimer; mediated via the coiled-coil region. Interacts with NORE1, which inhibits autoactivation. Interacts with and stabilizes SAV1. Interacts with RASSF1. Interacts with FOXO3. Interacts with RASSF2 (via SARAH domain). Interacts with AR, PKB/AKT1, TNNI3 and SIRT1. Interacts with MARK3 and SCRIB in the presence of DLG5. Interacts with DLG5 (via PDZ domain 3). The cofactor is Mg(2+). Autophosphorylated on serine and threonine residues. Phosphorylation at Thr-387 by PKB/AKT1, leads to inhibition of its: kinase activity, nuclear translocation and autophosphorylation at Thr-183. It also diminishes its cleavage by caspases and its ability to phosphorylate FOXO3. Post-translationally, proteolytically cleaved by caspase-3 during apoptosis at Asp-326 resulting in a 37 kDa form. Proteolytic cleavage results in kinase activation and nuclear translocation of the truncated form (MST1/N).

The protein resides in the cytoplasm. It is found in the nucleus. It catalyses the reaction L-seryl-[protein] + ATP = O-phospho-L-seryl-[protein] + ADP + H(+). The enzyme catalyses L-threonyl-[protein] + ATP = O-phospho-L-threonyl-[protein] + ADP + H(+). With respect to regulation, inhibited by the C-terminal non-catalytic region. Activated by caspase-cleavage. Full activation also requires homodimerization and autophosphorylation of Thr-183. Activated by RASSF1 which acts by preventing its dephosphorylation. Its function is as follows. Stress-activated, pro-apoptotic kinase which, following caspase-cleavage, enters the nucleus and induces chromatin condensation followed by internucleosomal DNA fragmentation. Key component of the Hippo signaling pathway which plays a pivotal role in organ size control and tumor suppression by restricting proliferation and promoting apoptosis. The core of this pathway is composed of a kinase cascade wherein STK3/MST2 and STK4/MST1, in complex with its regulatory protein SAV1, phosphorylates and activates LATS1/2 in complex with its regulatory protein MOB1, which in turn phosphorylates and inactivates YAP1 oncoprotein and WWTR1/TAZ. Phosphorylation of YAP1 by LATS2 inhibits its translocation into the nucleus to regulate cellular genes important for cell proliferation, cell death, and cell migration. STK3/MST2 and STK4/MST1 are required to repress proliferation of mature hepatocytes, to prevent activation of facultative adult liver stem cells (oval cells), and to inhibit tumor formation. Phosphorylates 'Ser-14' of histone H2B (H2BS14ph) during apoptosis. Phosphorylates FOXO3 upon oxidative stress, which results in its nuclear translocation and cell death initiation. Phosphorylates MOBKL1A, MOBKL1B and RASSF2. Phosphorylates TNNI3 (cardiac Tn-I) and alters its binding affinity to TNNC1 (cardiac Tn-C) and TNNT2 (cardiac Tn-T). Phosphorylates FOXO1 on 'Ser-212' and regulates its activation and stimulates transcription of PMAIP1 in a FOXO1-dependent manner. Phosphorylates SIRT1 and inhibits SIRT1-mediated p53/TP53 deacetylation, thereby promoting p53/TP53 dependent transcription and apoptosis upon DNA damage. Acts as an inhibitor of PKB/AKT1. Phosphorylates AR on 'Ser-650' and suppresses its activity by intersecting with PKB/AKT1 signaling and antagonizing formation of AR-chromatin complexes. This Mus musculus (Mouse) protein is Serine/threonine-protein kinase 4 (Stk4).